A 183-amino-acid chain; its full sequence is Endoribonuclease YbeY (183 aa).

The Zn(2+) site is built by histidine 142, histidine 146, and histidine 152.

This sequence belongs to the endoribonuclease YbeY family. Requires Zn(2+) as cofactor.

Its subcellular location is the cytoplasm. Its function is as follows. Single strand-specific metallo-endoribonuclease involved in late-stage 70S ribosome quality control and in maturation of the 3' terminus of the 16S rRNA. In Trichodesmium erythraeum (strain IMS101), this protein is Endoribonuclease YbeY.